The following is a 1020-amino-acid chain: Protein translocase subunit SecA (1020 aa).

Residues Gln99, 117–121, and Asp633 contribute to the ATP site; that span reads GEGKT. The disordered stretch occupies residues 963–992; that stretch reads NEQPSQEMAADEETQEESKIEENKPEPIVV. Residues 978-987 are compositionally biased toward basic and acidic residues; sequence EESKIEENKP. Residues Cys1002, Cys1004, Cys1013, and Cys1014 each coordinate Zn(2+).

The protein belongs to the SecA family. In terms of assembly, monomer and homodimer. Part of the essential Sec protein translocation apparatus which comprises SecA, SecYEG and auxiliary proteins SecDF. Other proteins may also be involved. Requires Zn(2+) as cofactor.

Its subcellular location is the cell inner membrane. It localises to the cytoplasm. It carries out the reaction ATP + H2O + cellular proteinSide 1 = ADP + phosphate + cellular proteinSide 2.. Functionally, part of the Sec protein translocase complex. Interacts with the SecYEG preprotein conducting channel. Has a central role in coupling the hydrolysis of ATP to the transfer of proteins into and across the cell membrane, serving as an ATP-driven molecular motor driving the stepwise translocation of polypeptide chains across the membrane. This Protochlamydia amoebophila (strain UWE25) protein is Protein translocase subunit SecA.